Here is a 106-residue protein sequence, read N- to C-terminus: UPF0122 protein Exig_1902 (106 aa).

It belongs to the UPF0122 family.

In terms of biological role, might take part in the signal recognition particle (SRP) pathway. This is inferred from the conservation of its genetic proximity to ftsY/ffh. May be a regulatory protein. In Exiguobacterium sibiricum (strain DSM 17290 / CCUG 55495 / CIP 109462 / JCM 13490 / 255-15), this protein is UPF0122 protein Exig_1902.